A 513-amino-acid chain; its full sequence is Probable lipid II flippase MurJ (513 aa).

Helical transmembrane passes span 3 to 23 (ILKS…LGFM), 25 to 45 (DLLI…FLAF), 83 to 103 (FISN…AFGI), 133 to 153 (IMFP…ILNA), 162 to 182 (YSSI…TAYF), 186 to 206 (ILSL…YQFP), 221 to 241 (ILNL…LGMS), 245 to 265 (VSII…ISWI), 271 to 291 (LVEF…LPLL), 313 to 333 (LVCI…ESLI), 354 to 374 (IEFY…LAGF), 382 to 402 (TPMK…IFFI), 405 to 425 (FQYT…FFLL), 441 to 461 (WLRF…LLFI), and 481 to 501 (LFYI…CLGL).

This sequence belongs to the MurJ/MviN family.

It localises to the cell inner membrane. It participates in cell wall biogenesis; peptidoglycan biosynthesis. Functionally, involved in peptidoglycan biosynthesis. Transports lipid-linked peptidoglycan precursors from the inner to the outer leaflet of the cytoplasmic membrane. This chain is Probable lipid II flippase MurJ, found in Buchnera aphidicola subsp. Baizongia pistaciae (strain Bp).